A 241-amino-acid polypeptide reads, in one-letter code: uncharacterized protein (241 aa).

The 66-residue stretch at 147–212 (FSYRSVILTL…EMYAWINSAQ (66 aa)) folds into the HTH luxR-type domain.

This is an uncharacterized protein from Escherichia coli O157:H7.